The following is a 259-amino-acid chain: Thiazole synthase (259 aa).

Lys100 acts as the Schiff-base intermediate with DXP in catalysis. 1-deoxy-D-xylulose 5-phosphate contacts are provided by residues Gly161, 187–188 (AG), and 209–210 (NT).

The protein belongs to the ThiG family. Homotetramer. Forms heterodimers with either ThiH or ThiS.

The protein localises to the cytoplasm. The enzyme catalyses [ThiS sulfur-carrier protein]-C-terminal-Gly-aminoethanethioate + 2-iminoacetate + 1-deoxy-D-xylulose 5-phosphate = [ThiS sulfur-carrier protein]-C-terminal Gly-Gly + 2-[(2R,5Z)-2-carboxy-4-methylthiazol-5(2H)-ylidene]ethyl phosphate + 2 H2O + H(+). Its pathway is cofactor biosynthesis; thiamine diphosphate biosynthesis. Functionally, catalyzes the rearrangement of 1-deoxy-D-xylulose 5-phosphate (DXP) to produce the thiazole phosphate moiety of thiamine. Sulfur is provided by the thiocarboxylate moiety of the carrier protein ThiS. In vitro, sulfur can be provided by H(2)S. This chain is Thiazole synthase, found in Methylobacillus flagellatus (strain ATCC 51484 / DSM 6875 / VKM B-1610 / KT).